Reading from the N-terminus, the 458-residue chain is N-acetylgalactosamine kinase (458 aa).

Arginine 43, glutamate 49, histidine 50, and aspartate 52 together coordinate alpha-D-galactose. 3 residues coordinate ATP: glycine 143, serine 145, and serine 146. Alpha-D-galactose is bound at residue aspartate 190. The active-site Proton acceptor is aspartate 190. Positions 233 and 234 each coordinate ATP.

It belongs to the GHMP kinase family. GalK subfamily. As to quaternary structure, monomer.

The catalysed reaction is N-acetyl-alpha-D-galactosamine + ATP = N-acetyl-alpha-D-galactosamine 1-phosphate + ADP + H(+). In terms of biological role, acts on GalNAc. Also acts as a galactokinase when galactose is present at high concentrations. May be involved in a salvage pathway for the reutilization of free GalNAc derived from the degradation of complex carbohydrates. In Homo sapiens (Human), this protein is N-acetylgalactosamine kinase (GALK2).